The primary structure comprises 444 residues: tRNA modification GTPase MnmE (444 aa).

Residues Arg-22, Glu-79, and Arg-118 each contribute to the (6S)-5-formyl-5,6,7,8-tetrahydrofolate site. Positions 214–368 constitute a TrmE-type G domain; the sequence is GMQVVLAGPP…LRDHLKSVMG (155 aa). Asn-224 contacts K(+). Residues 224-229, 243-249, and 268-271 each bind GTP; these read NAGKSS, TEVPGTT, and DTAG. Mg(2+) is bound at residue Ser-228. K(+) is bound by residues Thr-243, Val-245, and Thr-248. Thr-249 contacts Mg(2+). Lys-444 contacts (6S)-5-formyl-5,6,7,8-tetrahydrofolate.

It belongs to the TRAFAC class TrmE-Era-EngA-EngB-Septin-like GTPase superfamily. TrmE GTPase family. As to quaternary structure, homodimer. Heterotetramer of two MnmE and two MnmG subunits. Requires K(+) as cofactor.

The protein resides in the cytoplasm. Its function is as follows. Exhibits a very high intrinsic GTPase hydrolysis rate. Involved in the addition of a carboxymethylaminomethyl (cmnm) group at the wobble position (U34) of certain tRNAs, forming tRNA-cmnm(5)s(2)U34. This Alkalilimnicola ehrlichii (strain ATCC BAA-1101 / DSM 17681 / MLHE-1) protein is tRNA modification GTPase MnmE.